Reading from the N-terminus, the 1034-residue chain is Isoleucine--tRNA ligase (1034 aa).

The 'HIGH' region motif lies at 48-58; that stretch reads PTANGKPHIGH. Residues 588–592 carry the 'KMSKS' region motif; that stretch reads KMSKH. Lys-591 is a binding site for ATP.

It belongs to the class-I aminoacyl-tRNA synthetase family. IleS type 2 subfamily. As to quaternary structure, monomer. Zn(2+) is required as a cofactor.

It is found in the cytoplasm. It carries out the reaction tRNA(Ile) + L-isoleucine + ATP = L-isoleucyl-tRNA(Ile) + AMP + diphosphate. Catalyzes the attachment of isoleucine to tRNA(Ile). As IleRS can inadvertently accommodate and process structurally similar amino acids such as valine, to avoid such errors it has two additional distinct tRNA(Ile)-dependent editing activities. One activity is designated as 'pretransfer' editing and involves the hydrolysis of activated Val-AMP. The other activity is designated 'posttransfer' editing and involves deacylation of mischarged Val-tRNA(Ile). This is Isoleucine--tRNA ligase from Clostridium kluyveri (strain ATCC 8527 / DSM 555 / NBRC 12016 / NCIMB 10680 / K1).